Reading from the N-terminus, the 450-residue chain is MEGSKTSNNSTMQVSFVCQRCSQPLKLDTSFKILDRVTIQELTAPLLTTAQAKPGETQEEETNSGEEPFIETPRQDGVSRRFIPPARMMSTESANSFTLIGEASDGGTMENLSRRLKVTGDLFDIMSGQTDVDHPLCEECTDTLLDQLDTQLNVTENECQNYKRCLEILEQMNEDDSEQLQMELKELALEEERLIQELEDVEKNRKIVAENLEKVQAEAERLDQEEAQYQREYSEFKRQQLELDDELKSVENQMRYAQMQLDKLKKTNVFNATFHIWHSGQFGTINNFRLGRLPSVPVEWNEINAAWGQTVLLLHALANKMGLKFQRYRLVPYGNHSYLESLTDKSKELPLYCSGGLRFFWDNKFDHAMVAFLDCVQQFKEEVEKGETRFCLPYRMDVEKGKIEDTGGSGGSYSIKTQFNSEEQWTKALKFMLTNLKWGLAWVSSQFYNK.

At M1 the chain carries N-acetylmethionine. Residues S15 and S30 each carry the phosphoserine modification. Residues 48–72 (TTAQAKPGETQEEETNSGEEPFIET) form a disordered region. 3 positions are modified to phosphoserine; by AMPK: S90, S93, and S96. The short motif at 108-127 (TMENLSRRLKVTGDLFDIMS) is the BH3 element. The segment at 112 to 159 (LSRRLKVTGDLFDIMSGQTDVDHPLCEECTDTLLDQLDTQLNVTENEC) is interaction with BCL2 and BCL2L1. Residue T119 is modified to Phosphothreonine; by DAPK1. Residues 142–269 (DTLLDQLDTQ…QLDKLKKTNV (128 aa)) are a coiled coil. The interval 245 to 450 (DELKSVENQM…AWVSSQFYNK (206 aa)) is evolutionary conserved domain (ECD). Glycyl lysine isopeptide (Lys-Gly) (interchain with G-Cter in ubiquitin) cross-links involve residues K402 and K437. A required for membrane-association region spans residues 425-450 (WTKALKFMLTNLKWGLAWVSSQFYNK).

The protein belongs to the beclin family. A homodimeric form is proposed to exist; this metastable form readily transits to ATG14- or UVRAG-containing complexes with BECN1:UVRAG being more stable than BECN1:ATG14. Component of the PI3K (PI3KC3/PI3K-III/class III phosphatidylinositol 3-kinase) complex the core of which is composed of the catalytic subunit PIK3C3, the regulatory subunit PIK3R4 and BECN1 associating with additional regulatory/auxiliary subunits to form alternative complex forms. Alternative complex forms containing a fourth regulatory subunit in a mutually exclusive manner are PI3K complex I (PI3KC3-C1) containing ATG14, and PI3K complex II (PI3KC3-C2) containing UVRAG. PI3KC3-C1 displays a V-shaped architecture with PIK3R4 serving as a bridge between PIK3C3 and the ATG14:BECN1 subcomplex. Both, PI3KC3-C1 and PI3KC3-C2, can associate with further regulatory subunits, such as RUBCN, SH3GLB1/Bif-1 and AMBRA1. PI3KC3-C1 probably associates with PIK3CB. Forms a complex with PPP2CA and AMBRA1; AMBRA1 and BECN1 components of the complex regulate MYC stability via different pathways. Component of the complex, at least composed of LRPPRC, BECN1 and BCL2; the interactions prevent BECN1 from forming an autophagy-inducing complex with PIK3C3. Interacts with AMBRA1, GOPC, GRID2. Interacts with BCL2 and BCL2L1 isoform Bcl-X(L); the interaction inhibits BECN1 function in promoting autophagy by interfering with the formation of the PI3K complex. Interacts with cytosolic HMGB1; inhibits the interaction of BECN1 and BCL2 leading to promotion of autophagy. Interacts with USP10, USP13, VMP1, DAPK1, RAB39A. Interacts with the poly-Gln domain of ATXN3; the interaction causes deubiquitination at Lys-402 and stabilizes BECN1. Interacts with SLAMF1. Interacts with TRIM5; the interaction causes activation of BECN1 by causing its dissociation from its inhibitors BCL2 and TAB2. Interacts with active ULK1 (phosphorylated on 'Ser-317') and MEFV simultaneously. Interacts with WDR81 and WDR91; negatively regulates the PI3 kinase/PI3K activity associated with endosomal membranes. Interacts with LAPTM4B; competes with EGFR for LAPTM4B binding; regulates EGFR activity. Interacts with TRIM50. Interacts with TRIM16. Interacts with ATG14; this interaction is increased in the absence of TMEM39A. Interacts with WASHC1; preventing interaction with AMBRA1 and the DCX(AMBRA1) complex and subsequent ubiquitination. Interacts with TRIM17. Interacts with BCL2L10/BCL-B (via BH1 domain). Interacts with SH3BGRL. Interacts with IRGM; enhancing BECN1-interacting partners and influencing the composition of the BECN1 complex. Interacts with ARMC3. Interacts with LRPPRC. Phosphorylation at Thr-119 by DAPK1 reduces its interaction with BCL2 and BCL2L1 and promotes induction of autophagy. In response to autophagic stimuli, phosphorylated at serine residues by AMPK in an ATG14-dependent manner, and this phosphorylation is critical for maximally efficient autophagy. Post-translationally, polyubiquitinated by NEDD4, both with 'Lys-11'- and 'Lys-63'-linkages. 'Lys-11'-linked polyubiquitination leads to degradation and is enhanced when the stabilizing interaction partner VPS34 is depleted. Deubiquitinated by USP10 and USP13, leading to stabilize the PIK3C3/VPS34-containing complexes. Polyubiquitinated at Lys-402 with 'Lys-48'-linkages. 'Lys-48'-linked polyubiquitination of Lys-402 leads to degradation. Deubiquitinated by ATXN3, leading to stabilization. Ubiquitinated at Lys-437 via 'Lys-63'-linkage by the DCX(AMBRA1) complex, thereby increasing the association between BECN1 and PIK3C3 to promote PIK3C3 activity. 'Lys-48'-linked ubiquitination by RNF216 leads to proteasomal degradation and autophagy inhibition. In terms of processing, proteolytically processed by caspases including CASP8 and CASP3; the C-terminal fragments lack autophagy-inducing capacity and are proposed to induce apoptosis. Thus the cleavage is proposed to be an determinant to switch from autophagy to apoptosis pathways affecting cellular homeostasis including viral infections and survival of tumor cells.

The protein resides in the cytoplasm. Its subcellular location is the golgi apparatus. It localises to the trans-Golgi network membrane. The protein localises to the endosome membrane. It is found in the endoplasmic reticulum membrane. The protein resides in the mitochondrion membrane. Its subcellular location is the cytoplasmic vesicle. It localises to the autophagosome. The protein localises to the mitochondrion. It is found in the nucleus. In terms of biological role, plays a central role in autophagy. Acts as a core subunit of the PI3K complex that mediates formation of phosphatidylinositol 3-phosphate; different complex forms are believed to play a role in multiple membrane trafficking pathways: PI3KC3-C1 is involved in initiation of autophagosomes and PI3KC3-C2 in maturation of autophagosomes and endocytosis. Involved in regulation of degradative endocytic trafficking and required for the abscission step in cytokinesis, probably in the context of PI3KC3-C2. Essential for the formation of PI3KC3-C2 but not PI3KC3-C1 PI3K complex forms. Involved in endocytosis. May play a role in antiviral host defense. Its function is as follows. Beclin-1-C 35 kDa localized to mitochondria can promote apoptosis; it induces the mitochondrial translocation of BAX and the release of proapoptotic factors. This Pongo abelii (Sumatran orangutan) protein is Beclin-1 (BECN1).